A 519-amino-acid chain; its full sequence is Chromobox protein homolog 2 (519 aa).

The region spanning 12–70 (FAAECILSKRLRKGKLEYLVKWRGWSSKHNSWEPEENILDPRLLLAFQKKEHEKEVQNR) is the Chromo domain. Positions 60-69 (KKEHEKEVQN) are enriched in basic and acidic residues. Positions 60–180 (KKEHEKEVQN…PPEQKAARRP (121 aa)) are disordered. The segment covering 70–84 (RKRGKRPRGRPRKHT) has biased composition (basic residues). The a.T hook DNA-binding region spans 75-87 (RPRGRPRKHTVTS). Residues 103 to 119 (KSKSSSSSSSSTSSSSS) are compositionally biased toward low complexity. The span at 129–141 (LDSKRGPRGRETH) shows a compositional bias: basic and acidic residues. Glycyl lysine isopeptide (Lys-Gly) (interchain with G-Cter in SUMO2) cross-links involve residues K147 and K154. Residues 164 to 169 (KRGRKP) carry the Nuclear localization signal motif. Position 248 is an asymmetric dimethylarginine; alternate (R248). Omega-N-methylarginine; alternate is present on R248. Disordered regions lie at residues 295 to 336 (QKGG…LAPT) and 367 to 464 (AIPA…TSLP). S303 carries the phosphoserine modification. Polar residues-rich tracts occupy residues 321–336 (QRGN…LAPT) and 384–395 (TGANMTNAPTDN). Residues 453–464 (SSDSDPDSTSLP) show a composition bias toward low complexity.

In terms of assembly, component of a PRC1-like complex. The composition of the PRC1 complex may differ between the PRC1 complex in pluripotent embryonic stem cells containing RNF2, CBX7 and PCGF2, and the PRC1 complex in differentiating cells containing RNF2, CBX2, CBX4 and BMI1. Interacts with RING1/RNF2. Interacts (via chromodomain) with histone H3K9Me3 and H3K27me3. May interact with H3C15 and H3C1. Expressed in embryoid bodies.

It is found in the nucleus speckle. It localises to the chromosome. Functionally, component of a Polycomb group (PcG) multiprotein PRC1-like complex, a complex class required to maintain the transcriptionally repressive state of many genes, including Hox genes, throughout development. PcG PRC1 complex acts via chromatin remodeling and modification of histones; it mediates monoubiquitination of histone H2A 'Lys-119', rendering chromatin heritably changed in its expressibility. Binds to histone H3 trimethylated at 'Lys-9' (H3K9me3) or at 'Lys-27' (H3K27me3). Plays a role in the lineage differentiation of the germ layers in embryonic development. Involved in sexual development, acting as activator of NR5A1 expression. The chain is Chromobox protein homolog 2 (Cbx2) from Mus musculus (Mouse).